A 461-amino-acid chain; its full sequence is CUGBP Elav-like family member 3 (461 aa).

RRM domains follow at residues 7 to 88 and 95 to 175; these read IKLF…PADS and RKLF…FADT. Pro residues predominate over residues 345–358; the sequence is PPALVAQQPPPPPQ. Residues 345–375 form a disordered region; the sequence is PPALVAQQPPPPPQQQQQQQQQQQQREGPDG. Over residues 359–369 the composition is skewed to low complexity; the sequence is QQQQQQQQQQQ. Residues 376–454 form the RRM 3 domain; it reads CNIFIYHLPQ…KRLKVQLKRP (79 aa).

The protein belongs to the CELF/BRUNOL family.

Its subcellular location is the nucleus. It is found in the cytoplasm. RNA-binding protein involved in the regulation of pre-mRNA alternative splicing. Mediates exon inclusion and/or exclusion in pre-mRNA that are subject to tissue-specific and developmentally regulated alternative splicing. Specifically activates exon 5 inclusion of cardiac isoforms of TNNT2 during heart remodeling at the juvenile to adult transition. Activates the splicing of MAPT/Tau exon 10. Binds to muscle-specific splicing enhancer (MSE) intronic sites flanking the alternative exon 5 of TNNT2 pre-mRNA. This chain is CUGBP Elav-like family member 3 (CELF3), found in Bos taurus (Bovine).